The following is a 550-amino-acid chain: Phosphomannomutase (550 aa).

Ser148 acts as the Phosphoserine intermediate in catalysis. Ser148, Asp300, Asp302, and Asp304 together coordinate Mg(2+).

It belongs to the phosphohexose mutase family. Mg(2+) serves as cofactor.

The enzyme catalyses alpha-D-mannose 1-phosphate = D-mannose 6-phosphate. This Mycoplasma genitalium (strain ATCC 33530 / DSM 19775 / NCTC 10195 / G37) (Mycoplasmoides genitalium) protein is Phosphomannomutase (manB).